A 381-amino-acid polypeptide reads, in one-letter code: MKENELKNEKSVDVLSFKQLESQKIVLPQDLFRSSFTWFCYEIYKSLAFRIWMLLWLPLSVWWKLSNNCIYPLIVSLLVLFLGPIFVLVICGLSRKRSLSKQLIQFCKEVTENTPSSDPHDWEVVAANLNSYLYENKAWNTKYFFFNAMVCQEAFRTTLLEPFSLKKDEAAKVKSFKDSVPYIEEALGVYFREVEKQWKLFNSEKSWSPVGLEDAKLPKEAYRFKLTWFLKRISNIFMLIPFLNFLCCIYVSRGMCLLLRTFYLGWILFMLVQGFQNMRMIVLSVKMEHKMQFLSTIINEQESGANGWDEIAKKMNRYLFEKKVWKNEEFFFDGIDCEWFFSHFFYRVLSAKKSMRALSLNVELWPYIKEAQLSCSEESLA.

At methionine 1–glutamate 42 the chain is on the cytoplasmic side. The helical transmembrane segment at isoleucine 43–tryptophan 63 threads the bilayer. Residues lysine 64 to proline 72 lie on the Extracellular side of the membrane. Residues leucine 73 to leucine 93 traverse the membrane as a helical segment. The Cytoplasmic portion of the chain corresponds to serine 94–lysine 231. Residues arginine 232–serine 252 traverse the membrane as a helical segment. Topologically, residues arginine 253–glycine 254 are extracellular. Residues methionine 255–phenylalanine 275 traverse the membrane as a helical segment. The Cytoplasmic portion of the chain corresponds to glutamine 276–alanine 381.

This sequence belongs to the DUP/COS family.

The protein resides in the membrane. This is Protein COS1 (COS1) from Saccharomyces cerevisiae (strain ATCC 204508 / S288c) (Baker's yeast).